The chain runs to 278 residues: Dermonecrotic toxin LlSicTox-alphaIII3iii (278 aa).

His5 is a catalytic residue. Mg(2+) is bound by residues Glu25 and Asp27. His40 acts as the Nucleophile in catalysis. A disulfide bridge connects residues Cys44 and Cys50. A Mg(2+)-binding site is contributed by Asp84.

The protein belongs to the arthropod phospholipase D family. Class I subfamily. Requires Mg(2+) as cofactor. In terms of tissue distribution, expressed by the venom gland.

The protein resides in the secreted. It carries out the reaction an N-(acyl)-sphingosylphosphocholine = an N-(acyl)-sphingosyl-1,3-cyclic phosphate + choline. The catalysed reaction is an N-(acyl)-sphingosylphosphoethanolamine = an N-(acyl)-sphingosyl-1,3-cyclic phosphate + ethanolamine. It catalyses the reaction a 1-acyl-sn-glycero-3-phosphocholine = a 1-acyl-sn-glycero-2,3-cyclic phosphate + choline. The enzyme catalyses a 1-acyl-sn-glycero-3-phosphoethanolamine = a 1-acyl-sn-glycero-2,3-cyclic phosphate + ethanolamine. Dermonecrotic toxins cleave the phosphodiester linkage between the phosphate and headgroup of certain phospholipids (sphingolipid and lysolipid substrates), forming an alcohol (often choline) and a cyclic phosphate. This toxin acts on sphingomyelin (SM). It may also act on ceramide phosphoethanolamine (CPE), lysophosphatidylcholine (LPC) and lysophosphatidylethanolamine (LPE), but not on lysophosphatidylserine (LPS), and lysophosphatidylglycerol (LPG). It acts by transphosphatidylation, releasing exclusively cyclic phosphate products as second products. Induces dermonecrosis, hemolysis, increased vascular permeability, edema, inflammatory response, and platelet aggregation. The sequence is that of Dermonecrotic toxin LlSicTox-alphaIII3iii from Loxosceles laeta (South American recluse spider).